The primary structure comprises 473 residues: H(+)/Cl(-) exchange transporter ClcA (473 aa).

Topologically, residues 1–32 (MKTDTPSLETPQAARLRRRQLIRQLLERDKTP) are cytoplasmic. Residues 33-69 (LAILFMAAVVGTLVGLAAVAFDKGVAWLQNQRMGALV) traverse the membrane as a helical segment. Residues 70–76 (HTADNYP) lie on the Periplasmic side of the membrane. The chain crosses the membrane as a helical span at residues 77-100 (LLLTVAFLCSAVLAMFGYFLVRKY). The short motif at 106–110 (GSGIP) is the Selectivity filter part_1 element. Ser-107 contributes to the chloride binding site. An intramembrane region (helical) is located at residues 109–116 (IPEIEGAL). The Cytoplasmic portion of the chain corresponds to 117–123 (EDQRPVR). The next 2 membrane-spanning stretches (helical) occupy residues 124–141 (WWRV…TLGG) and 148–166 (EGPT…LDIF). Residues 146–150 (GREGP) carry the Selectivity filter part_2 motif. The Cytoplasmic segment spans residues 167-176 (RLKGDEARHT). Intramembrane regions (helical) lie at residues 177 to 189 (LLAT…LAAA) and 193 to 201 (PLAGILFII). Residues 202–214 (EEMRPQFRYTLIS) are Cytoplasmic-facing. A helical membrane pass occupies residues 215–232 (IKAVFIGVIMSTIMYRIF). Residues 233–252 (NHEVALIDVGKLSDAPLNTL) lie on the Periplasmic side of the membrane. The helical transmembrane segment at 253–281 (WLYLILGIIFGIFGPIFNKWVLGMQDLLH) threads the bilayer. Over 282-287 (RVHGGN) the chain is Cytoplasmic. Residues 288-309 (ITKWVLMGGAIGGLCGLLGFVA) traverse the membrane as a helical segment. The Periplasmic portion of the chain corresponds to 310–329 (PATSGGGFNLIPIATAGNFS). Transmembrane regions (helical) follow at residues 330–349 (MGML…LCFS) and 355–376 (GIFA…MVAV). The Selectivity filter part_3 signature appears at 355 to 359 (GIFAP). Chloride contacts are provided by Ile-356 and Phe-357. Residues 377–386 (ELFPQYHLEA) are Periplasmic-facing. Residues 387–401 (GTFAIAGMGALLAAS) constitute an intramembrane region (helical). Positions 402–404 (IRA) form an intramembrane region, note=Loop between two helices. The segment at residues 405–416 (PLTGIILVLEMT) is an intramembrane region (helical). An intramembrane region (note=Loop between two helices) is located at residues 417-421 (DNYQL). A helical transmembrane segment spans residues 422 to 438 (ILPMIITGLGATLLAQF). Residues 439–473 (TGGKPLYSAILARTLAKQEAEQLARSKAASASENT) lie on the Cytoplasmic side of the membrane. Tyr-445 provides a ligand contact to chloride.

The protein belongs to the chloride channel (TC 2.A.49) family. ClcA subfamily. As to quaternary structure, homodimer.

The protein localises to the cell inner membrane. The enzyme catalyses 2 chloride(in) + H(+)(out) = 2 chloride(out) + H(+)(in). Proton-coupled chloride transporter. Functions as antiport system and exchanges two chloride ions for 1 proton. Probably acts as an electrical shunt for an outwardly-directed proton pump that is linked to amino acid decarboxylation, as part of the extreme acid resistance (XAR) response. This is H(+)/Cl(-) exchange transporter ClcA from Shigella flexneri serotype 5b (strain 8401).